A 240-amino-acid polypeptide reads, in one-letter code: Allene oxide cyclase, chloroplastic (240 aa).

A chloroplast-targeting transit peptide spans 1 to 49 (MAAAAPSRVSVRAAAPGQTGGFAKIRPQVVVAAAARSAGVSGRRARSVR).

It belongs to the allene oxide cyclase family.

The protein localises to the plastid. It localises to the chloroplast. The enzyme catalyses (9Z,13S,15Z)-12,13-epoxyoctadeca-9,11,15-trienoate = (9S,13S,15Z)-12-oxophyto-10,15-dienoate. Its pathway is lipid metabolism; polyunsaturated fatty acid biosynthesis. Functionally, involved in the production of 12-oxo-phytodienoic acid (OPDA), a precursor of jasmonic acid (JA). Required for the production of JA in response to wounding. Necessary for flower and coleoptile development regulation by light, including blue (BL), red (RL) and far red (FR) lights. Involved in the auxin-mediated signaling pathway leading to growth stimulation. Essential for photodestruction of phyA upon activation by RL and FR. Implicated in responses to salt stress (NaCl). Its function is as follows. Confers resistance to incompatible strains of the blast fungus Magnaporthe grisea, jasmonic acid (JA) thus playing a significant role in the resistance to fungal infection. Implicated in riboflavin-induced resistance to the sheath blight Rhizoctonia solani. Required for Pseudomonas fluorescens-mediated JA-dependent induced systemic resistance (ISR). Confers some resistance, independently of the JA pathway but probably via OPDA accumulation, to brown planthopper (BPH, Nilaparvata lugens), a destructive, monophagous, piercing-sucking insect, mainly by reducing its feeding activity and survival rate. Triggers resistance to the chewing insect striped stem borer (SSB) Chilo suppressalis, to the root hemiparasite witchweed Striga hermonthica, and to the root feeder insect rice water weevil Lissorhoptrus oryzophilus, in a JA-dependent manner, by attenuating both the growth mass and growth rate of caterpillars. The chain is Allene oxide cyclase, chloroplastic from Oryza sativa subsp. indica (Rice).